The sequence spans 837 residues: ABC transporter A family member 8 (837 aa).

7 helical membrane passes run 29-49 (YFSTIIELLSPIVFVLIFYII), 244-264 (VVSLFGGLFYYCAIMISFIFL), 303-323 (LIICLLLIAIGAICKLPFFLG), 326-346 (FLVLLLNFFLFAISSSSMAFF), 356-376 (VAIGIGMAFFIVGSGLQLTFN), 393-413 (GAAFVRVILFILPMFHFSKVL), and 455-475 (LAYMFILVIVYLSLSAIIEYA). One can recognise an ABC transporter domain in the interval 516 to 750 (IRGLSKTFNK…YGEGYSVQVI (235 aa)). 553–560 (GSNGAGKS) lines the ATP pocket.

This sequence belongs to the ABC transporter superfamily. ABCA family.

It is found in the membrane. This is ABC transporter A family member 8 (abcA8) from Dictyostelium discoideum (Social amoeba).